Here is a 64-residue protein sequence, read N- to C-terminus: Large ribosomal subunit protein bL33 (64 aa).

The protein belongs to the bacterial ribosomal protein bL33 family.

The chain is Large ribosomal subunit protein bL33 from Microcystis aeruginosa (strain NIES-843 / IAM M-2473).